Consider the following 137-residue polypeptide: Small ribosomal subunit protein uS11A (137 aa).

The residue at position 2 (serine 2) is an N-acetylserine. The disordered stretch occupies residues 117–137 (DVTPVPSDSTRKKGGRRGRRL). Over residues 128–137 (KKGGRRGRRL) the composition is skewed to basic residues.

The protein belongs to the universal ribosomal protein uS11 family. Component of the small ribosomal subunit (SSU). Mature yeast ribosomes consist of a small (40S) and a large (60S) subunit. The 40S small subunit contains 1 molecule of ribosomal RNA (18S rRNA) and 33 different proteins (encoded by 57 genes). The large 60S subunit contains 3 rRNA molecules (25S, 5.8S and 5S rRNA) and 46 different proteins (encoded by 81 genes). uS11 interacts with eS1 forming part of the mRNA exit tunnel. uS11 interacts with snoRNA U3. uS11 interacts with MPP10. Component of the ribosomal small subunit (SSU) processome composed of at least 40 protein subunits and snoRNA U3. Post-translationally, N-terminally acetylated by acetyltransferase NatA.

The protein resides in the cytoplasm. It is found in the nucleus. Its subcellular location is the nucleolus. Component of the ribosome, a large ribonucleoprotein complex responsible for the synthesis of proteins in the cell. The small ribosomal subunit (SSU) binds messenger RNAs (mRNAs) and translates the encoded message by selecting cognate aminoacyl-transfer RNA (tRNA) molecules. The large subunit (LSU) contains the ribosomal catalytic site termed the peptidyl transferase center (PTC), which catalyzes the formation of peptide bonds, thereby polymerizing the amino acids delivered by tRNAs into a polypeptide chain. The nascent polypeptides leave the ribosome through a tunnel in the LSU and interact with protein factors that function in enzymatic processing, targeting, and the membrane insertion of nascent chains at the exit of the ribosomal tunnel. uS11 is involved in nucleolar processing of pre-18S ribosomal RNA and ribosome assembly. The chain is Small ribosomal subunit protein uS11A from Saccharomyces cerevisiae (strain ATCC 204508 / S288c) (Baker's yeast).